Here is a 218-residue protein sequence, read N- to C-terminus: Adenylate kinase (218 aa).

10–15 (GAGKGT) is a binding site for ATP. Residues 30–59 (STGDMLRAAVKEGSELGLKVKEIMNSGGLV) form an NMP region. Residues threonine 31, arginine 36, 57 to 59 (GLV), 85 to 88 (GFPR), and glutamine 92 each bind AMP. Residues 122 to 159 (GRRVHPGSGRVYHVDYNPPKEEGKDDVTGEALIQRDDD) form an LID region. ATP is bound by residues arginine 123 and 132–133 (VY). Residues arginine 156 and arginine 167 each contribute to the AMP site. Position 203 (glycine 203) interacts with ATP.

The protein belongs to the adenylate kinase family. Monomer.

The protein resides in the cytoplasm. The enzyme catalyses AMP + ATP = 2 ADP. Its pathway is purine metabolism; AMP biosynthesis via salvage pathway; AMP from ADP: step 1/1. In terms of biological role, catalyzes the reversible transfer of the terminal phosphate group between ATP and AMP. Plays an important role in cellular energy homeostasis and in adenine nucleotide metabolism. This is Adenylate kinase from Chromohalobacter salexigens (strain ATCC BAA-138 / DSM 3043 / CIP 106854 / NCIMB 13768 / 1H11).